A 70-amino-acid polypeptide reads, in one-letter code: DNA gyrase inhibitor YacG (70 aa).

4 residues coordinate Zn(2+): C7, C10, C26, and C30.

It belongs to the DNA gyrase inhibitor YacG family. In terms of assembly, interacts with GyrB. Zn(2+) is required as a cofactor.

Functionally, inhibits all the catalytic activities of DNA gyrase by preventing its interaction with DNA. Acts by binding directly to the C-terminal domain of GyrB, which probably disrupts DNA binding by the gyrase. This chain is DNA gyrase inhibitor YacG, found in Shewanella sediminis (strain HAW-EB3).